The primary structure comprises 432 residues: Homogentisate 1,2-dioxygenase (432 aa).

His287 acts as the Proton acceptor in catalysis. Residues His330 and Glu336 each contribute to the Fe cation site. Homogentisate is bound by residues Tyr345 and His366. Position 366 (His366) interacts with Fe cation.

Belongs to the homogentisate dioxygenase family. In terms of assembly, hexamer; dimer of trimers. Requires Fe cation as cofactor.

The catalysed reaction is homogentisate + O2 = 4-maleylacetoacetate + H(+). It participates in amino-acid degradation; L-phenylalanine degradation; acetoacetate and fumarate from L-phenylalanine: step 4/6. In terms of biological role, involved in the catabolism of homogentisate (2,5-dihydroxyphenylacetate or 2,5-OH-PhAc), a central intermediate in the degradation of phenylalanine and tyrosine. Catalyzes the oxidative ring cleavage of the aromatic ring of homogentisate to yield maleylacetoacetate. The polypeptide is Homogentisate 1,2-dioxygenase (Pseudomonas aeruginosa (strain ATCC 15692 / DSM 22644 / CIP 104116 / JCM 14847 / LMG 12228 / 1C / PRS 101 / PAO1)).